The following is a 227-amino-acid chain: NAD(P)H-quinone oxidoreductase subunit K, chloroplastic (227 aa).

4 residues coordinate [4Fe-4S] cluster: Cys43, Cys44, Cys108, and Cys139.

The protein belongs to the complex I 20 kDa subunit family. NDH is composed of at least 16 different subunits, 5 of which are encoded in the nucleus. [4Fe-4S] cluster serves as cofactor.

Its subcellular location is the plastid. It is found in the chloroplast thylakoid membrane. The enzyme catalyses a plastoquinone + NADH + (n+1) H(+)(in) = a plastoquinol + NAD(+) + n H(+)(out). It carries out the reaction a plastoquinone + NADPH + (n+1) H(+)(in) = a plastoquinol + NADP(+) + n H(+)(out). In terms of biological role, NDH shuttles electrons from NAD(P)H:plastoquinone, via FMN and iron-sulfur (Fe-S) centers, to quinones in the photosynthetic chain and possibly in a chloroplast respiratory chain. The immediate electron acceptor for the enzyme in this species is believed to be plastoquinone. Couples the redox reaction to proton translocation, and thus conserves the redox energy in a proton gradient. This chain is NAD(P)H-quinone oxidoreductase subunit K, chloroplastic, found in Spinacia oleracea (Spinach).